Consider the following 533-residue polypeptide: Lysine--tRNA ligase (533 aa).

The 'HIGH' region motif lies at 28–36 (PSGHIHIGN). The 'KMSKS' region motif lies at 278–282 (PMSSS).

It belongs to the class-I aminoacyl-tRNA synthetase family.

Its subcellular location is the cytoplasm. It carries out the reaction tRNA(Lys) + L-lysine + ATP = L-lysyl-tRNA(Lys) + AMP + diphosphate. This Methanococcus maripaludis (strain DSM 14266 / JCM 13030 / NBRC 101832 / S2 / LL) protein is Lysine--tRNA ligase (lysS).